The chain runs to 245 residues: Myelin protein P0 (245 aa).

A signal peptide spans 1 to 28 (MEPSGLRTPCSLLALVLLSALVLTPTLA). Residues 29-143 (IEVYTDREVY…VGKSSYVHLQ (115 aa)) form the Ig-like V-type domain. Residues 29-153 (IEVYTDREVY…VQEKGPARAG (125 aa)) are Extracellular-facing. A disulfide bridge connects residues Cys-49 and Cys-125. N-linked (GlcNAc...) asparagine glycosylation is present at Asn-120. The helical transmembrane segment at 154-174 (LILGIIIAVALALVIVVTILI) threads the bilayer. The Cytoplasmic portion of the chain corresponds to 175 to 245 (LLIRYCWLRR…GIGDSRKDRK (71 aa)). Basic and acidic residues-rich tracts occupy residues 199–208 (KLHKAKDSSK) and 224–245 (TRGKSSEKKAKGGIGDSRKDRK). The interval 199 to 245 (KLHKAKDSSKRSSRQTPILYAMLDQTRGKSSEKKAKGGIGDSRKDRK) is disordered.

The protein belongs to the myelin P0 protein family.

It is found in the cell membrane. Creation of an extracellular membrane face which guides the wrapping process and ultimately compacts adjacent lamellae. In Xenopus laevis (African clawed frog), this protein is Myelin protein P0 (mpz).